We begin with the raw amino-acid sequence, 551 residues long: Arginine--tRNA ligase (551 aa).

The 'HIGH' region motif lies at 125–135; that stretch reads ANPTGPLHIGH.

Belongs to the class-I aminoacyl-tRNA synthetase family. Monomer.

Its subcellular location is the cytoplasm. The catalysed reaction is tRNA(Arg) + L-arginine + ATP = L-arginyl-tRNA(Arg) + AMP + diphosphate. This is Arginine--tRNA ligase from Nitratidesulfovibrio vulgaris (strain ATCC 29579 / DSM 644 / CCUG 34227 / NCIMB 8303 / VKM B-1760 / Hildenborough) (Desulfovibrio vulgaris).